Here is a 109-residue protein sequence, read N- to C-terminus: Membrane-bound lysozyme inhibitor of C-type lysozyme (109 aa).

The signal sequence occupies residues 1-17 (MTMKKLLIIILPVLLSG). Cys18 carries the N-palmitoyl cysteine lipid modification. Cys18 carries the S-diacylglycerol cysteine lipid modification. Cys37 and Cys102 are disulfide-bonded.

Belongs to the MliC family. Type 1 subfamily. In terms of assembly, monomer.

The protein resides in the cell outer membrane. Functionally, specifically inhibits C-type lysozymes. This is Membrane-bound lysozyme inhibitor of C-type lysozyme from Escherichia coli (strain K12).